The following is a 404-amino-acid chain: Glucose-1-phosphate adenylyltransferase (404 aa).

Residues Tyr-99, Gly-164, 179–180 (EK), and Ser-197 contribute to the alpha-D-glucose 1-phosphate site.

It belongs to the bacterial/plant glucose-1-phosphate adenylyltransferase family. Homotetramer.

The catalysed reaction is alpha-D-glucose 1-phosphate + ATP + H(+) = ADP-alpha-D-glucose + diphosphate. It participates in glycan biosynthesis; glycogen biosynthesis. In terms of biological role, involved in the biosynthesis of ADP-glucose, a building block required for the elongation reactions to produce glycogen. Catalyzes the reaction between ATP and alpha-D-glucose 1-phosphate (G1P) to produce pyrophosphate and ADP-Glc. This is Glucose-1-phosphate adenylyltransferase from Nocardia farcinica (strain IFM 10152).